The following is a 393-amino-acid chain: MVAAKTIKGMVDKAELPDNIKEELYAKLIEYNKKYKLKKAEVQAIIDETVKEYQKALIEPGEAIGTVAAQSIGEPSTQMTLNTFHYAGVAEINVTLGLPRIIEIVDARKNPSTPIMTVYLDEEHRYDREKALEVARRIEGTSLENLARETTIDILNFEFIVEIDPERLEKAGLDMERIQRKLESSFKSAEFEVDGYTVIMRPKKVGKISSLRRLAEKVKKHRLKGLSRVGKTVITKDSKTGEYIIRTEGSNFKQVLKVPGVDPTRTRTNDIREIAEVLGIEAARNAIIDEILKTMEEQGLEVDVRHIMLVADMMTLDGVIRPIGRHGIVGEKASVLARAAFEITTQHLFEAAERGAVDPLNGVVENVLIGQPVPVGTGTVKLAMNLPLRPKRE.

The protein belongs to the RNA polymerase beta' chain family. As to quaternary structure, part of the RNA polymerase complex.

It is found in the cytoplasm. It carries out the reaction RNA(n) + a ribonucleoside 5'-triphosphate = RNA(n+1) + diphosphate. In terms of biological role, DNA-dependent RNA polymerase (RNAP) catalyzes the transcription of DNA into RNA using the four ribonucleoside triphosphates as substrates. Forms part of the jaw domain. This Thermococcus celer protein is DNA-directed RNA polymerase subunit Rpo1C.